The following is a 793-amino-acid chain: Splicing factor 3A subunit 1 (793 aa).

Residues 1 to 42 form a disordered region; that stretch reads MPAGPVQAVPPPPPAATEPKQPTEEEASSKEDSTPSKPVVGI. Residue Lys20 forms a Glycyl lysine isopeptide (Lys-Gly) (interchain with G-Cter in SUMO2) linkage. Positions 21–34 are enriched in basic and acidic residues; the sequence is QPTEEEASSKEDST. The stretch at 52 to 94 is one SURP motif 1 repeat; the sequence is IVDKTASFVARNGPEFEARIRQNEINNPKFNFLNPNDPYHAYY. Lys55 carries the post-translational modification N6-acetyllysine. Residue Lys131 forms a Glycyl lysine isopeptide (Lys-Gly) (interchain with G-Cter in SUMO2) linkage. Residues 166 to 208 form an SURP motif 2 repeat; the sequence is VVKLTAQFVARNGRQFLTQLMQKEQRNYQFDFLRPQHSLFNYF. A disordered region spans residues 318 to 412; it reads GESEEVEMEV…PAPAPDEYLV (95 aa). 3 positions are modified to phosphoserine: Ser320, Ser329, and Ser359. Acidic residues-rich tracts occupy residues 320 to 334 and 354 to 364; these read SEEVEMEVESDEEDE and DMDEGSDDEEE. Pro residues predominate over residues 368 to 384; that stretch reads VPPPPETPMPPPLPPTP. The segment covering 388-397 has biased composition (basic and acidic residues); the sequence is IVRKDYDPKA. Ser413 is modified (phosphoserine). Lys424 participates in a covalent cross-link: Glycyl lysine isopeptide (Lys-Gly) (interchain with G-Cter in SUMO2). Ser451 bears the Phosphoserine mark. Tyr456 is modified (phosphotyrosine). Over residues 488–502 the composition is skewed to basic and acidic residues; that stretch reads IGEEEIQKPEEKVTW. Disordered stretches follow at residues 488 to 518, 530 to 584, and 666 to 685; these read IGEEEIQKPEEKVTWDGHSGSMARTQQAAQA, HKAK…AMPP, and PMPPVHPPPPMEDEPASKKL. Lys499 is covalently cross-linked (Glycyl lysine isopeptide (Lys-Gly) (interchain with G-Cter in SUMO2)). At Ser508 the chain carries Phosphoserine. Residues 509–518 are compositionally biased toward polar residues; the sequence is MARTQQAAQA. Residue Lys542 forms a Glycyl lysine isopeptide (Lys-Gly) (interchain with G-Cter in SUMO2) linkage. The span at 563–572 shows a compositional bias: polar residues; the sequence is ATNIPSSAPP. Positions 666–675 are enriched in pro residues; it reads PMPPVHPPPP. Residues 680–702 form a required and sufficient for nuclear import region; the sequence is PASKKLKTEDSLMPEEEFLRRNK. Residue Lys686 forms a Glycyl lysine isopeptide (Lys-Gly) (interchain with G-Cter in SUMO2) linkage. In terms of domain architecture, Ubiquitin-like spans 707–793; it reads IKVQVPNMQD…ALKERGGRKK (87 aa). Phosphotyrosine is present on Tyr759.

In terms of assembly, component of the 17S U2 SnRNP complex, a ribonucleoprotein complex that contains small nuclear RNA (snRNA) U2 and a number of specific proteins. Part of the SF3A subcomplex of the 17S U2 SnRNP complex which is composed of three subunits; SF3A3/SAP61, SF3A2/SAP62 and SF3A1/SAP114. SF3A associates with the splicing factor SF3B and a 12S RNA unit to form the mature 17S U2 small nuclear ribonucleoprotein complex (17S U2 snRNP). SF3A1 functions as a scaffold that interacts directly with both SF3A2 and SF3A3. Identified in the spliceosome 'E' complex, a precursor of the spliceosome 'A' complex. Identified in the spliceosome 'A' and 'B' complexes. Identified in the spliceosome 'C' complex. Interacts with P2RX6; resulting in a reduction of the splicing activity.

Its subcellular location is the nucleus. The protein resides in the nucleus speckle. Functionally, component of the 17S U2 SnRNP complex of the spliceosome, a large ribonucleoprotein complex that removes introns from transcribed pre-mRNAs. The 17S U2 SnRNP complex (1) directly participates in early spliceosome assembly and (2) mediates recognition of the intron branch site during pre-mRNA splicing by promoting the selection of the pre-mRNA branch-site adenosine, the nucleophile for the first step of splicing. Within the 17S U2 SnRNP complex, SF3A1 is part of the SF3A subcomplex that contributes to the assembly of the 17S U2 snRNP, and the subsequent assembly of the pre-spliceosome 'E' complex and the pre-catalytic spliceosome 'A' complex. Involved in pre-mRNA splicing as a component of pre-catalytic spliceosome 'B' complexes. In Bos taurus (Bovine), this protein is Splicing factor 3A subunit 1 (SF3A1).